Here is a 438-residue protein sequence, read N- to C-terminus: Putative metabolite transport protein HI_0281 (438 aa).

Topologically, residues 1 to 17 are cytoplasmic; that stretch reads MSTQLRNNPMKVALASM. The helical transmembrane segment at 18-38 threads the bilayer; it reads VGTAIEFFDYYIYAAAAVLVF. Residues 39–52 are Periplasmic-facing; it reads NTQFFHSDDPLSND. A helical membrane pass occupies residues 53–73; it reads LLSLSTLALAFFARPIGSALF. At 74 to 85 the chain is on the cytoplasmic side; sequence GHFGDKIGRKKT. The chain crosses the membrane as a helical span at residues 86–106; sequence LVASLVLMGGSTVVIGLLPNY. Over 107-115 the chain is Periplasmic; it reads AQIGIWAPI. Residues 116–136 traverse the membrane as a helical segment; it reads LLCVCRVGQGIGLGGEWGGAA. The Cytoplasmic segment spans residues 137-156; that stretch reads LVATENAPEGKRAWYGTFPQ. A helical membrane pass occupies residues 157-177; the sequence is LGAPIGLFVANGTFFLVSYLL. The Periplasmic segment spans residues 178 to 181; it reads GHNA. Residues 182-202 form a helical membrane-spanning segment; that stretch reads LVEWAWRIPFVSSILLVAVGL. The Cytoplasmic segment spans residues 203–239; it reads YVRLTLHESHVFVEAEQKGKKLNAPVSVVFTKHLKPM. A helical membrane pass occupies residues 240–260; that stretch reads VIGTFIMVATYSLFYIMTAFA. Over 261–286 the chain is Periplasmic; that stretch reads QAYSRTAPKLSEAGYALGLGIPANTF. Residues 287-307 form a helical membrane-spanning segment; that stretch reads TGLLLISAIVFGIFISISGFY. The Cytoplasmic segment spans residues 308-314; sequence ADKIGRR. A helical membrane pass occupies residues 315–336; it reads KWLIWVTIAIGVLGLAMPLFLE. At 337 to 342 the chain is on the periplasmic side; it reads NGTPVS. Residues 343-363 traverse the membrane as a helical segment; it reads VFAFLVIGMAIMGMTFGPMAA. Residues 364–377 lie on the Cytoplasmic side of the membrane; it reads LLPELFPTEVRYSG. Residues 378 to 398 form a helical membrane-spanning segment; that stretch reads ASLAYNLASIIGATIAAMISL. The Periplasmic portion of the chain corresponds to 399 to 405; that stretch reads KINASFG. Residues 406–426 traverse the membrane as a helical segment; the sequence is VMGVGIYLAINALMTFLALLA. The Cytoplasmic portion of the chain corresponds to 427-438; the sequence is SKETKNVDLTEI.

Belongs to the major facilitator superfamily. Sugar transporter (TC 2.A.1.1) family.

The protein localises to the cell inner membrane. The chain is Putative metabolite transport protein HI_0281 from Haemophilus influenzae (strain ATCC 51907 / DSM 11121 / KW20 / Rd).